The chain runs to 156 residues: Small ribosomal subunit protein uS7 (156 aa).

The protein belongs to the universal ribosomal protein uS7 family. As to quaternary structure, part of the 30S ribosomal subunit. Contacts proteins S9 and S11.

Functionally, one of the primary rRNA binding proteins, it binds directly to 16S rRNA where it nucleates assembly of the head domain of the 30S subunit. Is located at the subunit interface close to the decoding center, probably blocks exit of the E-site tRNA. This chain is Small ribosomal subunit protein uS7, found in Crocosphaera subtropica (strain ATCC 51142 / BH68) (Cyanothece sp. (strain ATCC 51142)).